A 369-amino-acid polypeptide reads, in one-letter code: Probable dual-specificity RNA methyltransferase RlmN (369 aa).

Glu-108 functions as the Proton acceptor in the catalytic mechanism. In terms of domain architecture, Radical SAM core spans 114–351 (YPDRATLCIS…LAQGVSCTVR (238 aa)). Cys-121 and Cys-362 are oxidised to a cystine. Positions 128, 132, and 135 each coordinate [4Fe-4S] cluster. S-adenosyl-L-methionine contacts are provided by residues 183–184 (GE), Ser-217, 240–242 (SLH), and Asn-319. Residue Cys-362 is the S-methylcysteine intermediate of the active site.

Belongs to the radical SAM superfamily. RlmN family. The cofactor is [4Fe-4S] cluster.

The protein localises to the cytoplasm. The catalysed reaction is adenosine(2503) in 23S rRNA + 2 reduced [2Fe-2S]-[ferredoxin] + 2 S-adenosyl-L-methionine = 2-methyladenosine(2503) in 23S rRNA + 5'-deoxyadenosine + L-methionine + 2 oxidized [2Fe-2S]-[ferredoxin] + S-adenosyl-L-homocysteine. The enzyme catalyses adenosine(37) in tRNA + 2 reduced [2Fe-2S]-[ferredoxin] + 2 S-adenosyl-L-methionine = 2-methyladenosine(37) in tRNA + 5'-deoxyadenosine + L-methionine + 2 oxidized [2Fe-2S]-[ferredoxin] + S-adenosyl-L-homocysteine. Functionally, specifically methylates position 2 of adenine 2503 in 23S rRNA and position 2 of adenine 37 in tRNAs. The chain is Probable dual-specificity RNA methyltransferase RlmN from Rhodococcus opacus (strain B4).